Here is a 513-residue protein sequence, read N- to C-terminus: Sulfhydryl oxidase 1 (513 aa).

The first 30 residues, 1 to 30, serve as a signal peptide directing secretion; that stretch reads MAAAAVARRVVLVLVLAAASLAAAPRGAAA. The region spanning 31-174 is the Thioredoxin domain; sequence RSLGGREGPG…LLKWINNQMK (144 aa). N51 is a glycosylation site (N-linked (GlcNAc...) asparagine). Residues C76 and C79 each act as nucleophile in the active site. C76 and C79 are joined by a disulfide. N-linked (GlcNAc...) asparagine glycans are attached at residues N193 and N266. C301 and C313 are oxidised to a cystine. Residues 304 to 406 enclose the ERV/ALR sulfhydryl oxidase domain; sequence SKSETRGFSC…GDPLFPKVTW (103 aa). FAD is bound by residues R309, W316, H320, E350, H354, 377–384, K403, and W406; that span reads WSTHNKVN. A disulfide bridge connects residues C348 and C351. A disulfide bridge connects residues C412 and C415.

FAD is required as a cofactor.

The protein resides in the secreted. It carries out the reaction 2 R'C(R)SH + O2 = R'C(R)S-S(R)CR' + H2O2. Its function is as follows. Catalyzes the oxidation of sulfhydryl groups in peptide and protein thiols to disulfides with the reduction of oxygen to hydrogen peroxide. May contribute to disulfide bond formation in a variety of secreted proteins. This is Sulfhydryl oxidase 1 (QSOX1) from Oryza sativa subsp. japonica (Rice).